A 454-amino-acid chain; its full sequence is MWRTPASTGPLRQDRQMFFHATLARSFINALSVRGDDDAVDRLNYYYTPLILAVCCLVISAKQYGGTPIECWVNPHSRESMEEYIESYCWIQNTYWIPMYENVPDDHTAREEKQIGYYQWVPFILIAEALMFSLPCIFWRLCSFQSGLNIQTLINAACDGQALLDASDRQKAVEAITTNFVDNLDLQSPNGRIRARGWIARIKFSRFLSGQCLSILHSFTKLLYSMNVVAQFLILNACLKSSDFLFFGFQVLNDIWAGRPWTETGHFPRVTLCDFEVRYLANLNRYTVQCALLINIINEKVFAFLWCWYMILAIITTCSFIYWIANSFIHSEKVDYVMKFIQIAESSEFKKLQKFEKDATVERLYTVIAFAPHLLDTFVSDFLKSDGVLMLRMISNHAGDMIVVQLVRNLWQEFRERNWREFEEHEEMKDVEMRRIHGGERIVISNPGQTKSFL.

The Cytoplasmic portion of the chain corresponds to 1–48 (MWRTPASTGPLRQDRQMFFHATLARSFINALSVRGDDDAVDRLNYYYT). The helical transmembrane segment at 49 to 69 (PLILAVCCLVISAKQYGGTPI) threads the bilayer. Over 70-118 (ECWVNPHSRESMEEYIESYCWIQNTYWIPMYENVPDDHTAREEKQIGYY) the chain is Extracellular. The chain crosses the membrane as a helical span at residues 119–139 (QWVPFILIAEALMFSLPCIFW). The Cytoplasmic portion of the chain corresponds to 140 to 214 (RLCSFQSGLN…SRFLSGQCLS (75 aa)). The helical transmembrane segment at 215 to 235 (ILHSFTKLLYSMNVVAQFLIL) threads the bilayer. Residues 236 to 300 (NACLKSSDFL…ALLINIINEK (65 aa)) are Extracellular-facing. Residues 301 to 321 (VFAFLWCWYMILAIITTCSFI) form a helical membrane-spanning segment. Residues 322–454 (YWIANSFIHS…SNPGQTKSFL (133 aa)) lie on the Cytoplasmic side of the membrane.

The protein belongs to the pannexin family. As to expression, specifically expressed in sensory neurons and interneurons in the head and tail. Expressed in neurons AWC, ASH, AFD, ASI, ADL, ASK, BAG, AWB, and ADF (head sensory neurons); ADA, AIZ, RIC, AIY, and AIM (head interneurons); PHA and PHB (tail sensory neurons); and PVC and PVQ (tail interneurons).

It is found in the cell membrane. The protein resides in the cell junction. It localises to the gap junction. Its function is as follows. Structural component of the gap junctions that specifically coordinates left-right asymmetry in the developing nervous system. Acts by forming gap junction network linking embryonic neurons and providing electrical coupling between cells, leading to promote or inhibit AWC signaling. Required for the left and right AWC olfactory neurons to establish asymmetric patterns of gene expression during embryogenesis. Acts autonomously. In Caenorhabditis elegans, this protein is Innexin-19 (inx-19).